A 620-amino-acid chain; its full sequence is Dihydroxy-acid dehydratase (620 aa).

Mg(2+) is bound at residue Asp-82. Position 123 (Cys-123) interacts with [2Fe-2S] cluster. Mg(2+) is bound by residues Asp-124 and Lys-125. Residue Lys-125 is modified to N6-carboxylysine. Cys-197 serves as a coordination point for [2Fe-2S] cluster. Glu-493 is a binding site for Mg(2+). Ser-519 acts as the Proton acceptor in catalysis.

It belongs to the IlvD/Edd family. Homodimer. [2Fe-2S] cluster serves as cofactor. The cofactor is Mg(2+).

The enzyme catalyses (2R)-2,3-dihydroxy-3-methylbutanoate = 3-methyl-2-oxobutanoate + H2O. The catalysed reaction is (2R,3R)-2,3-dihydroxy-3-methylpentanoate = (S)-3-methyl-2-oxopentanoate + H2O. It participates in amino-acid biosynthesis; L-isoleucine biosynthesis; L-isoleucine from 2-oxobutanoate: step 3/4. It functions in the pathway amino-acid biosynthesis; L-valine biosynthesis; L-valine from pyruvate: step 3/4. In terms of biological role, functions in the biosynthesis of branched-chain amino acids. Catalyzes the dehydration of (2R,3R)-2,3-dihydroxy-3-methylpentanoate (2,3-dihydroxy-3-methylvalerate) into 2-oxo-3-methylpentanoate (2-oxo-3-methylvalerate) and of (2R)-2,3-dihydroxy-3-methylbutanoate (2,3-dihydroxyisovalerate) into 2-oxo-3-methylbutanoate (2-oxoisovalerate), the penultimate precursor to L-isoleucine and L-valine, respectively. In Bifidobacterium longum (strain NCC 2705), this protein is Dihydroxy-acid dehydratase.